Consider the following 145-residue polypeptide: Peptide methionine sulfoxide reductase MsrB (145 aa).

One can recognise a MsrB domain in the interval 4–127 (SDELKQRIGD…NSAALKFIPY (124 aa)). The active-site Nucleophile is the cysteine 116.

It belongs to the MsrB Met sulfoxide reductase family.

The enzyme catalyses L-methionyl-[protein] + [thioredoxin]-disulfide + H2O = L-methionyl-(R)-S-oxide-[protein] + [thioredoxin]-dithiol. The chain is Peptide methionine sulfoxide reductase MsrB from Streptococcus pyogenes serotype M18 (strain MGAS8232).